Here is a 334-residue protein sequence, read N- to C-terminus: Ornithine carbamoyltransferase (334 aa).

Carbamoyl phosphate contacts are provided by residues 56-59, glutamine 83, arginine 107, and 134-137; these read STRT and HPTQ. L-ornithine-binding positions include asparagine 168, aspartate 232, and 236-237; that span reads SM. Carbamoyl phosphate contacts are provided by residues 274–275 and arginine 320; that span reads CL.

This sequence belongs to the aspartate/ornithine carbamoyltransferase superfamily. OTCase family.

The protein localises to the cytoplasm. It catalyses the reaction carbamoyl phosphate + L-ornithine = L-citrulline + phosphate + H(+). Its pathway is amino-acid biosynthesis; L-arginine biosynthesis; L-arginine from L-ornithine and carbamoyl phosphate: step 1/3. In terms of biological role, reversibly catalyzes the transfer of the carbamoyl group from carbamoyl phosphate (CP) to the N(epsilon) atom of ornithine (ORN) to produce L-citrulline. The chain is Ornithine carbamoyltransferase from Escherichia coli O157:H7.